The following is a 542-amino-acid chain: Endonuclease 4 homolog (542 aa).

Disordered regions lie at residues 89 to 123 (NEEI…QTSI) and 141 to 234 (PFFS…ENKF). Low complexity-rich tracts occupy residues 99 to 115 (SKKL…QQSK) and 147 to 170 (NNAS…TTTT). The stretch at 171–206 (TKKRNNKDEENEDDNEEEEEEEEEEEDKKSKKKTTT) forms a coiled coil. Residues 179–196 (EENEDDNEEEEEEEEEEE) are compositionally biased toward acidic residues. Positions 205–215 (TTTTTTTTTTA) are enriched in low complexity. A compositionally biased stretch (basic residues) spans 216–227 (YKKKSSPKKKKV). The short motif at 222–227 (PKKKKV) is the Nuclear localization signal element. The Zn(2+) site is built by His328, His368, Glu404, Asp438, His441, His475, Asp488, His490, and Glu520.

Belongs to the AP endonuclease 2 family. Requires Zn(2+) as cofactor.

It is found in the nucleus. The enzyme catalyses Endonucleolytic cleavage to 5'-phosphooligonucleotide end-products.. In terms of biological role, plays a role in DNA repair. It cleaves phosphodiester bonds at apurinic or apyrimidinic sites (AP sites) to produce new 5'-ends that are base-free deoxyribose 5-phosphate residues. The sequence is that of Endonuclease 4 homolog (apnA) from Dictyostelium discoideum (Social amoeba).